We begin with the raw amino-acid sequence, 706 residues long: MDSVMVKKEVLENPDHDLKRKLEENKEEENSLSTTSKSKRQVIVPVCMPKIHYSPLKTGLCYDVRMRYHAKIFTSYFEYIDPHPEDPRRIYRIYKILAENGLINDPTLSGVDDLGDLMLKIPVRAATSEEILEVHTKEHLEFIESTEKMSREELLKETEKGDSVYFNNDSYASARLPCGGAIEACKAVVEGRVKNSLAVVRPPGHHAEPQAAGGFCLFSNVAVAAKNILKNYPESVRRIMILDWDIHHGNGTQKSFYQDDQVLYVSLHRFEMGKYYPGTIQGQYDQTGEGKGEGFNCNITWPVGGVGDAEYMWAFEQVVMPMGREFKPDLVIISSGFDAADGDTIGQCHVTPSCYGHMTHMLKSLARGNLCVVLEGGYNLDAIARSALSVAKVLIGEPPDELPDPLSDPKPEVIEMIDKVIRLQSKYWNCFRRRHANSGCNFNEPINDSIISKNFPLQKAIRQQQQHYLSDEFNFVTLPLVSMDLPDNTVLCTPNISESNTIIIVVHDTSDIWAKRNVISGTIDLSSSVIIDNSLDFIKWGLDRKYGIIDVNIPLTLFEPDNYSGMITSQEVLIYLWDNYIKYFPSVAKIAFIGIGDSYSGIVHLLGHRDTRAVTKTVINFLGDKQLKPLVPLVDETLSEWYFKNSLIFSNNSHQCWKENESRKPRKKFGRVLRCDTDGLNNIIEERFEEATDFILDSFEEWSDEE.

Over residues 1–24 the composition is skewed to basic and acidic residues; that stretch reads MDSVMVKKEVLENPDHDLKRKLEE. Positions 1 to 36 are disordered; it reads MDSVMVKKEVLENPDHDLKRKLEENKEEENSLSTTS. A histone deacetylase region spans residues 67–396; that stretch reads RYHAKIFTSY…ALSVAKVLIG (330 aa). The active site involves H206.

Belongs to the histone deacetylase family. HD type 2 subfamily.

It localises to the nucleus. It carries out the reaction N(6)-acetyl-L-lysyl-[histone] + H2O = L-lysyl-[histone] + acetate. Functionally, responsible for the deacetylation of lysine residues on the N-terminal part of the core histones (H2A, H2B, H3 and H4). Histone deacetylation gives a tag for epigenetic repression and plays an important role in transcriptional regulation, cell cycle progression and developmental events. Histone deacetylases act via the formation of large multiprotein complexes. The polypeptide is Histone deacetylase HDA1 (HDA1) (Saccharomyces cerevisiae (strain ATCC 204508 / S288c) (Baker's yeast)).